The chain runs to 309 residues: Solute carrier family 25 member 48 (309 aa).

3 Solcar repeats span residues 3-86, 99-209, and 218-305; these read VFQL…TQRL, CSML…FCNW, and PPPC…SLQF. A run of 6 helical transmembrane segments spans residues 9–29, 61–81, 105–125, 186–206, 218–238, and 281–299; these read FLAG…LDTV, GLSF…GFFS, TVAS…VDLV, GAMI…YTLF, PPPC…WVTA, and ATVN…FLGY.

It belongs to the mitochondrial carrier (TC 2.A.29) family.

The protein localises to the mitochondrion inner membrane. In Danio rerio (Zebrafish), this protein is Solute carrier family 25 member 48 (slc25a48).